A 297-amino-acid chain; its full sequence is Vacuolar protein sorting-associated protein 26C (297 aa).

Belongs to the VPS26 family. As to quaternary structure, component of the commander complex that is essential for endosomal recycling of transmembrane cargos; the commander complex is composed of the CCC subcomplex and the retriever subcomplex. Component of the heterotrimeric retriever complex consisting of VPS26C, VPS29 and VPS35L; within the complex interacts with VPS35L. Interacts with SNX17 (via C-terminus); the interaction is direct and associates SNX17 with the retriever complex. Interacts with SNX31; the interaction is direct. As to expression, ubiquitously expressed.

It localises to the endosome. In terms of biological role, component of the commander complex that is essential for endosomal recycling of transmembrane cargos; the commander complex is composed of the CCC subcomplex and the retriever subcomplex. Component of the retriever complex, which is a heterotrimeric complex related to retromer cargo-selective complex (CSC) and essential for retromer-independent retrieval and recycling of numerous cargos such as integrin alpha-5/beta-1 (ITGA5:ITGB1). The recruitment of the retriever complex to the endosomal membrane involves CCC and WASH complexes. In the endosomes, drives the retriever and recycling of NxxY-motif-containing cargo proteins by coupling to SNX17, a cargo essential for the homeostatic maintenance of numerous cell surface proteins associated with processes that include cell migration, cell adhesion, nutrient supply and cell signaling. Its function is as follows. (Microbial infection) The heterotrimeric retriever complex, in collaboration with the CCC complex, mediates the exit of human papillomavirus to the cell surface. The protein is Vacuolar protein sorting-associated protein 26C of Homo sapiens (Human).